The sequence spans 502 residues: Probable glycine dehydrogenase (decarboxylating) subunit 2 (502 aa).

N6-(pyridoxal phosphate)lysine is present on Lys-273.

It belongs to the GcvP family. C-terminal subunit subfamily. As to quaternary structure, the glycine cleavage system is composed of four proteins: P, T, L and H. In this organism, the P 'protein' is a heterodimer of two subunits. It depends on pyridoxal 5'-phosphate as a cofactor.

The enzyme catalyses N(6)-[(R)-lipoyl]-L-lysyl-[glycine-cleavage complex H protein] + glycine + H(+) = N(6)-[(R)-S(8)-aminomethyldihydrolipoyl]-L-lysyl-[glycine-cleavage complex H protein] + CO2. Functionally, the glycine cleavage system catalyzes the degradation of glycine. The P protein binds the alpha-amino group of glycine through its pyridoxal phosphate cofactor; CO(2) is released and the remaining methylamine moiety is then transferred to the lipoamide cofactor of the H protein. This chain is Probable glycine dehydrogenase (decarboxylating) subunit 2, found in Pyrococcus horikoshii (strain ATCC 700860 / DSM 12428 / JCM 9974 / NBRC 100139 / OT-3).